Reading from the N-terminus, the 551-residue chain is Medium/long-chain-fatty-acid--CoA/3-oxocholest-4-en-26-oate--CoA ligase (551 aa).

Residues 172–180, Asp417, Arg432, and Lys523 contribute to the ATP site; that span reads TGGTTGFPK.

This sequence belongs to the ATP-dependent AMP-binding enzyme family.

The enzyme catalyses a medium-chain fatty acid + ATP + CoA = a medium-chain fatty acyl-CoA + AMP + diphosphate. It carries out the reaction a long-chain fatty acid + ATP + CoA = a long-chain fatty acyl-CoA + AMP + diphosphate. The catalysed reaction is (25S)-3-oxocholest-4-en-26-oate + ATP + CoA = (25S)-3-oxocholest-4-en-26-oyl-CoA + AMP + diphosphate. The protein operates within lipid metabolism; fatty acid biosynthesis. It participates in steroid metabolism; cholesterol metabolism. Its function is as follows. Plays an essential role in degradation of the side chains of C-24 branched-chain sterols. Not essential for degradation of straight chain sterols such as cholesterol. Catalyzes the activation of medium/long-chain fatty acids as acyl-coenzyme A (acyl-CoA), which are then transferred to the multifunctional polyketide synthase (PKS) type III for further chain extension. May be involved in the degradation of cholesterol via the degradation of the side chains of C-24 branched-chain sterols. This chain is Medium/long-chain-fatty-acid--CoA/3-oxocholest-4-en-26-oate--CoA ligase, found in Mycolicibacterium smegmatis (strain ATCC 700084 / mc(2)155) (Mycobacterium smegmatis).